A 71-amino-acid polypeptide reads, in one-letter code: Large ribosomal subunit protein bL31 (71 aa).

Zn(2+) is bound by residues C16, C18, C36, and C39.

This sequence belongs to the bacterial ribosomal protein bL31 family. Type A subfamily. In terms of assembly, part of the 50S ribosomal subunit. Zn(2+) serves as cofactor.

Functionally, binds the 23S rRNA. The polypeptide is Large ribosomal subunit protein bL31 (Thermotoga maritima (strain ATCC 43589 / DSM 3109 / JCM 10099 / NBRC 100826 / MSB8)).